A 137-amino-acid chain; its full sequence is Methylglyoxal synthase (137 aa).

The region spanning 1 to 137 (MKIALIAHDK…NLVRGGEPNV (137 aa)) is the MGS-like domain. Substrate is bound by residues His-8, Lys-12, 34–37 (TGTT), and 54–55 (SG). Residue Asp-60 is the Proton donor/acceptor of the active site. His-87 contacts substrate.

This sequence belongs to the methylglyoxal synthase family.

The catalysed reaction is dihydroxyacetone phosphate = methylglyoxal + phosphate. Functionally, catalyzes the formation of methylglyoxal from dihydroxyacetone phosphate. The chain is Methylglyoxal synthase from Bacillus velezensis (strain DSM 23117 / BGSC 10A6 / LMG 26770 / FZB42) (Bacillus amyloliquefaciens subsp. plantarum).